A 224-amino-acid polypeptide reads, in one-letter code: Deoxyribose-phosphate aldolase (224 aa).

D92 (proton donor/acceptor) is an active-site residue. K155 acts as the Schiff-base intermediate with acetaldehyde in catalysis. K184 (proton donor/acceptor) is an active-site residue.

It belongs to the DeoC/FbaB aldolase family. DeoC type 1 subfamily.

It localises to the cytoplasm. The enzyme catalyses 2-deoxy-D-ribose 5-phosphate = D-glyceraldehyde 3-phosphate + acetaldehyde. It functions in the pathway carbohydrate degradation; 2-deoxy-D-ribose 1-phosphate degradation; D-glyceraldehyde 3-phosphate and acetaldehyde from 2-deoxy-alpha-D-ribose 1-phosphate: step 2/2. Its function is as follows. Catalyzes a reversible aldol reaction between acetaldehyde and D-glyceraldehyde 3-phosphate to generate 2-deoxy-D-ribose 5-phosphate. This Clostridium perfringens (strain 13 / Type A) protein is Deoxyribose-phosphate aldolase.